The primary structure comprises 233 residues: H-2 class II histocompatibility antigen, A-F alpha chain (233 aa).

Residues 1 to 88 (EDDIEADHVG…KRSNFTPATN (88 aa)) form an alpha-1 region. Over 1-195 (EDDIEADHVG…IPAPMSELTE (195 aa)) the chain is Extracellular. The segment at 89-182 (EAPQATVFPK…GLEEPVLKHW (94 aa)) is alpha-2. The 93-residue stretch at 91–183 (PQATVFPKSP…LEEPVLKHWE (93 aa)) folds into the Ig-like C1-type domain. Cysteine 111 and cysteine 167 are joined by a disulfide. Asparagine 122 carries N-linked (GlcNAc...) asparagine glycosylation. The connecting peptide stretch occupies residues 183–195 (EPEIPAPMSELTE). Residues 196 to 221 (TVVCALGLSVGLVGIVVGTIFIIQGL) traverse the membrane as a helical segment. Residues 222–233 (RSGGTSRHPGPL) are Cytoplasmic-facing.

Belongs to the MHC class II family.

Its subcellular location is the membrane. The chain is H-2 class II histocompatibility antigen, A-F alpha chain (H2-Aa) from Mus musculus (Mouse).